A 375-amino-acid chain; its full sequence is Ribosomal RNA large subunit methyltransferase G (375 aa).

This sequence belongs to the methyltransferase superfamily. RlmG family.

It is found in the cytoplasm. The enzyme catalyses guanosine(1835) in 23S rRNA + S-adenosyl-L-methionine = N(2)-methylguanosine(1835) in 23S rRNA + S-adenosyl-L-homocysteine + H(+). Its function is as follows. Specifically methylates the guanine in position 1835 (m2G1835) of 23S rRNA. This is Ribosomal RNA large subunit methyltransferase G from Erwinia tasmaniensis (strain DSM 17950 / CFBP 7177 / CIP 109463 / NCPPB 4357 / Et1/99).